A 357-amino-acid polypeptide reads, in one-letter code: DNA replication and repair protein RecF (357 aa).

30-37 is a binding site for ATP; the sequence is GANGSGKT.

It belongs to the RecF family.

It is found in the cytoplasm. In terms of biological role, the RecF protein is involved in DNA metabolism; it is required for DNA replication and normal SOS inducibility. RecF binds preferentially to single-stranded, linear DNA. It also seems to bind ATP. The sequence is that of DNA replication and repair protein RecF from Citrobacter koseri (strain ATCC BAA-895 / CDC 4225-83 / SGSC4696).